Consider the following 150-residue polypeptide: Arginine repressor (150 aa).

This sequence belongs to the ArgR family.

It localises to the cytoplasm. The protein operates within amino-acid biosynthesis; L-arginine biosynthesis [regulation]. Functionally, regulates arginine biosynthesis genes. This Clostridium botulinum (strain ATCC 19397 / Type A) protein is Arginine repressor.